The chain runs to 121 residues: Basic phospholipase A2 (121 aa).

Cystine bridges form between cysteine 26/cysteine 114, cysteine 28/cysteine 44, cysteine 43/cysteine 94, cysteine 49/cysteine 121, cysteine 50/cysteine 87, cysteine 57/cysteine 80, and cysteine 74/cysteine 85. Ca(2+) is bound by residues tyrosine 27, glycine 29, and glycine 31. Histidine 47 is an active-site residue. A Ca(2+)-binding site is contributed by aspartate 48. Residue aspartate 88 is part of the active site.

As to quaternary structure, homopentamer. Ca(2+) serves as cofactor. As to expression, expressed by the venom gland.

Its subcellular location is the secreted. The enzyme catalyses a 1,2-diacyl-sn-glycero-3-phosphocholine + H2O = a 1-acyl-sn-glycero-3-phosphocholine + a fatty acid + H(+). Its function is as follows. Snake venom phospholipase A2 (PLA2) that displays moderate myotoxic activity in vivo, and cytotoxic activity in vitro. In vitro, shows anticoagulant activity on human plasma and in mice causes inflammatory cell infiltration and myonecrosis in the gastrocnemius muscles of CD-1 mice 3 hours after injection (100 ug). PLA2 catalyzes the calcium-dependent hydrolysis of the 2-acyl groups in 3-sn-phosphoglycerides. The chain is Basic phospholipase A2 from Porthidium ophryomegas (Slender hognose viper).